The chain runs to 398 residues: Elongation factor Tu (398 aa).

The tr-type G domain occupies 10–207 (KPHVNIGTIG…TVDEYIPEPE (198 aa)). Residues 19–26 (GHVDHGKT) are G1. A GTP-binding site is contributed by 19–26 (GHVDHGKT). Position 26 (threonine 26) interacts with Mg(2+). A G2 region spans residues 63 to 67 (GITIN). Residues 84-87 (DAPG) form a G3 region. GTP is bound by residues 84–88 (DAPGH) and 139–142 (NKVD). A G4 region spans residues 139-142 (NKVD). The segment at 177–179 (SAL) is G5.

Belongs to the TRAFAC class translation factor GTPase superfamily. Classic translation factor GTPase family. EF-Tu/EF-1A subfamily. Monomer.

It is found in the cytoplasm. The catalysed reaction is GTP + H2O = GDP + phosphate + H(+). In terms of biological role, GTP hydrolase that promotes the GTP-dependent binding of aminoacyl-tRNA to the A-site of ribosomes during protein biosynthesis. In Streptococcus pneumoniae serotype 4 (strain ATCC BAA-334 / TIGR4), this protein is Elongation factor Tu.